Reading from the N-terminus, the 159-residue chain is Methyl-coenzyme M reductase operon protein D (159 aa).

As to quaternary structure, MCR is composed of three subunits: alpha, beta, and gamma. The function of proteins C and D is not known.

The polypeptide is Methyl-coenzyme M reductase operon protein D (mcrD) (Methanococcus voltae).